Consider the following 137-residue polypeptide: Holo-[acyl-carrier-protein] synthase (137 aa).

Mg(2+) contacts are provided by Asp-8 and Glu-58.

It belongs to the P-Pant transferase superfamily. AcpS family. Mg(2+) is required as a cofactor.

It is found in the cytoplasm. It carries out the reaction apo-[ACP] + CoA = holo-[ACP] + adenosine 3',5'-bisphosphate + H(+). In terms of biological role, transfers the 4'-phosphopantetheine moiety from coenzyme A to a Ser of acyl-carrier-protein. The chain is Holo-[acyl-carrier-protein] synthase from Lactobacillus delbrueckii subsp. bulgaricus (strain ATCC BAA-365 / Lb-18).